A 141-amino-acid polypeptide reads, in one-letter code: Galactose-6-phosphate isomerase subunit LacA 1 (141 aa).

Belongs to the LacAB/RpiB family. In terms of assembly, heteromultimeric protein consisting of LacA and LacB.

It carries out the reaction aldehydo-D-galactose 6-phosphate = keto-D-tagatose 6-phosphate. It functions in the pathway carbohydrate metabolism; D-galactose 6-phosphate degradation; D-tagatose 6-phosphate from D-galactose 6-phosphate: step 1/1. The polypeptide is Galactose-6-phosphate isomerase subunit LacA 1 (Streptococcus agalactiae serotype III (strain NEM316)).